Reading from the N-terminus, the 673-residue chain is Elongation factor G 1 (673 aa).

A tr-type G domain is found at 3-277; sequence KELRNIGIIA…SIVDYLPSPL (275 aa). Residues 12-19, 76-80, and 130-133 each bind GTP; these read AHIDAGKT, DTPGH, and NKMD.

The protein belongs to the TRAFAC class translation factor GTPase superfamily. Classic translation factor GTPase family. EF-G/EF-2 subfamily.

Its subcellular location is the cytoplasm. In terms of biological role, catalyzes the GTP-dependent ribosomal translocation step during translation elongation. During this step, the ribosome changes from the pre-translocational (PRE) to the post-translocational (POST) state as the newly formed A-site-bound peptidyl-tRNA and P-site-bound deacylated tRNA move to the P and E sites, respectively. Catalyzes the coordinated movement of the two tRNA molecules, the mRNA and conformational changes in the ribosome. This is Elongation factor G 1 from Syntrophomonas wolfei subsp. wolfei (strain DSM 2245B / Goettingen).